Consider the following 213-residue polypeptide: Amelogenin, X isoform (213 aa).

Residues Met1 to Ser16 form the signal peptide. Phosphoserine is present on Ser32. Composition is skewed to low complexity over residues Val96–Pro105 and Gln114–Gln160. Residues Val96–Asp213 are disordered. Positions Pro161 to Pro194 are enriched in pro residues.

Belongs to the amelogenin family. Interacts with KRT5. In terms of processing, phosphorylated by FAM20C in vitro.

The protein localises to the secreted. It localises to the extracellular space. The protein resides in the extracellular matrix. Functionally, plays a role in the biomineralization of teeth. Seems to regulate the formation of crystallites during the secretory stage of tooth enamel development. Thought to play a major role in the structural organization and mineralization of developing enamel. The polypeptide is Amelogenin, X isoform (AMELX) (Bos taurus (Bovine)).